Here is a 190-residue protein sequence, read N- to C-terminus: Imidazoleglycerol-phosphate dehydratase (190 aa).

This sequence belongs to the imidazoleglycerol-phosphate dehydratase family.

It localises to the cytoplasm. It carries out the reaction D-erythro-1-(imidazol-4-yl)glycerol 3-phosphate = 3-(imidazol-4-yl)-2-oxopropyl phosphate + H2O. It functions in the pathway amino-acid biosynthesis; L-histidine biosynthesis; L-histidine from 5-phospho-alpha-D-ribose 1-diphosphate: step 6/9. This chain is Imidazoleglycerol-phosphate dehydratase, found in Methanococcus maripaludis (strain C7 / ATCC BAA-1331).